A 579-amino-acid polypeptide reads, in one-letter code: Glutamate--tRNA ligase (579 aa).

The 'HIGH' region signature appears at 114–124; that stretch reads PNPNGPWHIGH.

Belongs to the class-I aminoacyl-tRNA synthetase family. Glutamate--tRNA ligase type 2 subfamily.

Its subcellular location is the cytoplasm. The catalysed reaction is tRNA(Glu) + L-glutamate + ATP = L-glutamyl-tRNA(Glu) + AMP + diphosphate. In terms of biological role, catalyzes the attachment of glutamate to tRNA(Glu) in a two-step reaction: glutamate is first activated by ATP to form Glu-AMP and then transferred to the acceptor end of tRNA(Glu). The protein is Glutamate--tRNA ligase of Haloarcula marismortui (strain ATCC 43049 / DSM 3752 / JCM 8966 / VKM B-1809) (Halobacterium marismortui).